The primary structure comprises 131 residues: MSPKIRQTIYLLGTAAPALLGIVLIWGGLDAESAADLGDIIAGVVSILVSGAPAVAAGTVRSQRKDGTLSTSPVDQVTKGVEQVLAARQSAEAEVAKVKQALETAVSGSLPQLGPLATQILNVADDTVWRP.

2 helical membrane passes run 9 to 29 (IYLL…WGGL) and 40 to 60 (IIAG…AGTV). A coiled-coil region spans residues 74–104 (VDQVTKGVEQVLAARQSAEAEVAKVKQALET).

It belongs to the Mycobacterium phage D29 holin family. Homomultimer. Self-associates to form a pore.

It localises to the host cell inner membrane. Accumulates harmlessly in the cytoplasmic membrane until it reaches a critical concentration that triggers the formation of micron-scale pores (holes) causing host cell membrane disruption and endolysin escape into the periplasmic space. Determines the precise timing of host cell lysis. Participates with the endolysin protein in the sequential events which lead to the programmed host cell lysis releasing the mature viral particles from the host cell. This chain is Holin (11), found in Mycobacterium (Mycobacteriophage L5).